Here is a 175-residue protein sequence, read N- to C-terminus: 3-hydroxydecanoyl-[acyl-carrier-protein] dehydratase (175 aa).

His-71 is an active-site residue.

The protein belongs to the thioester dehydratase family. FabA subfamily. As to quaternary structure, homodimer.

Its subcellular location is the cytoplasm. It carries out the reaction a (3R)-hydroxyacyl-[ACP] = a (2E)-enoyl-[ACP] + H2O. The catalysed reaction is (3R)-hydroxydecanoyl-[ACP] = (2E)-decenoyl-[ACP] + H2O. It catalyses the reaction (2E)-decenoyl-[ACP] = (3Z)-decenoyl-[ACP]. It participates in lipid metabolism; fatty acid biosynthesis. Its function is as follows. Necessary for the introduction of cis unsaturation into fatty acids. Catalyzes the dehydration of (3R)-3-hydroxydecanoyl-ACP to E-(2)-decenoyl-ACP and then its isomerization to Z-(3)-decenoyl-ACP. Can catalyze the dehydratase reaction for beta-hydroxyacyl-ACPs with saturated chain lengths up to 16:0, being most active on intermediate chain length. The sequence is that of 3-hydroxydecanoyl-[acyl-carrier-protein] dehydratase from Rhodopseudomonas palustris (strain BisB5).